Consider the following 326-residue polypeptide: Glyceraldehyde-3-phosphate dehydrogenase, cytosolic (326 aa).

NAD(+) is bound by residues 2 to 3 (RI), Asp-24, and Arg-71. D-glyceraldehyde 3-phosphate-binding positions include 142 to 144 (SCT), Thr-173, 202 to 203 (TG), and Arg-225. Cys-143 functions as the Nucleophile in the catalytic mechanism. Asn-307 serves as a coordination point for NAD(+).

The protein belongs to the glyceraldehyde-3-phosphate dehydrogenase family.

It is found in the cytoplasm. The catalysed reaction is D-glyceraldehyde 3-phosphate + phosphate + NAD(+) = (2R)-3-phospho-glyceroyl phosphate + NADH + H(+). It participates in carbohydrate degradation; glycolysis; pyruvate from D-glyceraldehyde 3-phosphate: step 1/5. Functionally, key enzyme in glycolysis that catalyzes the first step of the pathway by converting D-glyceraldehyde 3-phosphate (G3P) into 3-phospho-D-glyceroyl phosphate. Essential for the maintenance of cellular ATP levels and carbohydrate metabolism. This chain is Glyceraldehyde-3-phosphate dehydrogenase, cytosolic (GAPC), found in Nicotiana tabacum (Common tobacco).